A 511-amino-acid chain; its full sequence is Phosphoenolpyruvate carboxylase (511 aa).

This sequence belongs to the PEPCase type 2 family. In terms of assembly, homotetramer. Requires Mg(2+) as cofactor.

The catalysed reaction is oxaloacetate + phosphate = phosphoenolpyruvate + hydrogencarbonate. Its activity is regulated as follows. Allosterically inhibited by L-aspartate and L-malate. PEPC activity is not affected by allosteric activators of E.coli PEPC such as glucose 6-phosphate, fructose 1,6-bisphosphate, and acetyl coenzyme A. Catalyzes the irreversible beta-carboxylation of phosphoenolpyruvate (PEP) to form oxaloacetate (OAA), a four-carbon dicarboxylic acid source for the tricarboxylic acid cycle. The chain is Phosphoenolpyruvate carboxylase from Saccharolobus solfataricus (strain ATCC 35092 / DSM 1617 / JCM 11322 / P2) (Sulfolobus solfataricus).